A 292-amino-acid polypeptide reads, in one-letter code: AKT-interacting protein (292 aa).

The tract at residues 1-64 is disordered; that stretch reads MNPFWNMSSA…ISPSPSVQPT (64 aa). The segment covering 14–23 has biased composition (basic and acidic residues); that stretch reads KRSDNDEKIA. The UBC core domain maps to 75–223; it reads YLEYSLLAEF…VVDSVKLCNS (149 aa). The interval 273-292 is disordered; that stretch reads SWVKPGSVLPFSKEENSLQT.

Belongs to the ubiquitin-conjugating enzyme family. FTS subfamily.

Its subcellular location is the cytoplasm. The protein resides in the cell membrane. Functionally, may function to promote vesicle trafficking and/or fusion. May also regulate apoptosis. This chain is AKT-interacting protein (aktip), found in Xenopus tropicalis (Western clawed frog).